A 375-amino-acid chain; its full sequence is Decapping and exoribonuclease protein Rai1 (375 aa).

Residues arginine 43 and 120–122 (LRG) each bind substrate. Positions 180, 222, 224, 247, and 248 each coordinate Mg(2+). Glutamate 222 provides a ligand contact to substrate. Substrate is bound by residues lysine 249 and glutamine 274.

This sequence belongs to the DXO/Dom3Z family. As to quaternary structure, interacts with Rat1. Requires Mg(2+) as cofactor.

It catalyses the reaction a 5'-end triphospho-ribonucleoside in mRNA + H2O = a 5'-end phospho-ribonucleoside in mRNA + diphosphate + H(+). The enzyme catalyses a 5'-end NAD(+)-phospho-ribonucleoside in mRNA + H2O = a 5'-end phospho-ribonucleoside in mRNA + NAD(+) + H(+). The catalysed reaction is a 5'-end (N(7)-methyl 5'-triphosphoguanosine)-ribonucleoside-ribonucleotide in mRNA + H2O = a (N(7)-methyl 5'-triphosphoguanosine)-nucleoside + a 5'-end phospho-ribonucleoside in mRNA + H(+). Its function is as follows. Decapping enzyme for NAD-capped RNAs: specifically hydrolyzes the nicotinamide adenine dinucleotide (NAD) cap from a subset of RNAs by removing the entire NAD moiety from the 5'-end of an NAD-capped RNA. The NAD-cap is present at the 5'-end of some RNAs and snoRNAs. In contrast to the canonical 5'-end N7 methylguanosine (m7G) cap, the NAD cap promotes mRNA decay. Also acts as a non-canonical decapping enzyme that removes the entire cap structure of m7G capped or incompletely capped RNAs and mediates their subsequent degradation. Specifically degrades pre-mRNAs with a defective 5'-end m7G cap and is part of a pre-mRNA capping quality control. Possesses 5'-pyrophosphohydrolase activity, hydrolyzing the 5'-end triphosphate to release pyrophosphates, and 5'-3' exonuclease activity. May be involved in RNA degradation in the nucleus. The polypeptide is Decapping and exoribonuclease protein Rai1 (Drosophila melanogaster (Fruit fly)).